The sequence spans 339 residues: tRNA methyltransferase 10 homolog A (339 aa).

Disordered regions lie at residues 1–90 (MSSE…HDRK) and 282–339 (DKAC…SLPH). Over residues 14–35 (NVDKKQGINEDQEESQKPRLGE) the composition is skewed to basic and acidic residues. A coiled-coil region spans residues 52-81 (KQWEEQRELRKQKRKEKRKRKKLERQCQME). Basic residues predominate over residues 61–74 (RKQKRKEKRKRKKL). An SAM-dependent MTase TRM10-type domain is found at 89–279 (RKRVRRDVVH…TILPQRKGAV (191 aa)). Positions 300 to 309 (GGSDSDSSEE) are enriched in acidic residues. Positions 310-330 (EYSRNELDSPHEEKQDKENHT) are enriched in basic and acidic residues. A Phosphoserine modification is found at serine 336.

Belongs to the class IV-like SAM-binding methyltransferase superfamily. TRM10 family. Interacts with tRNA. In terms of tissue distribution, expressed in embryonic and fetal brain. It is expressed throughout the dorsal telencephalon at 8 and 11 weeks of gestation, with highest expression in ventricular zone and marginal zone. Detected in cerebellar cortex and nuclei, but not in dorsal telencephalon, at later stages.

The protein resides in the nucleus. The protein localises to the nucleolus. The enzyme catalyses guanosine(9) in tRNA + S-adenosyl-L-methionine = N(1)-methylguanosine(9) in tRNA + S-adenosyl-L-homocysteine + H(+). S-adenosyl-L-methionine-dependent guanine N(1)-methyltransferase that catalyzes the formation of N(1)-methylguanine at position 9 (m1G9) in tRNAs. Probably not able to catalyze formation of N(1)-methyladenine at position 9 (m1A9) in tRNAs. This is tRNA methyltransferase 10 homolog A (TRMT10A) from Homo sapiens (Human).